A 189-amino-acid chain; its full sequence is Interferon alpha-F (189 aa).

Positions 1 to 23 (MAPAWSLLLALLLLSCNAICSLG) are cleaved as a signal peptide. Intrachain disulfides connect Cys-24–Cys-122 and Cys-52–Cys-162.

The protein belongs to the alpha/beta interferon family.

The protein resides in the secreted. In terms of biological role, produced by macrophages, IFN-alpha have antiviral activities. Interferon stimulates the production of two enzymes: a protein kinase and an oligoadenylate synthetase. This chain is Interferon alpha-F (IFNAF), found in Bos taurus (Bovine).